Reading from the N-terminus, the 356-residue chain is Heparan sulfate 2-O-sulfotransferase 1 (356 aa).

Residues 1 to 11 are Cytoplasmic-facing; it reads MGLLRIMMPPK. Residues 12–28 traverse the membrane as a helical; Signal-anchor for type II membrane protein segment; it reads LQLLAVLTFGVLMLFLE. Residues 24 to 51 are a coiled coil; sequence MLFLENQIQNLEESREKLERAIARHEVR. Topologically, residues 29 to 356 are lumenal; sequence NQIQNLEESR…FYEKIYPKSN (328 aa). Residues Lys-83, Thr-84, Ala-85, Ser-86, Thr-87, and Ser-88 each contribute to the adenosine 3',5'-bisphosphate site. N-linked (GlcNAc...) asparagine glycosylation is found at Asn-108 and Asn-127. Active-site residues include His-140 and His-142. Arg-164 and Ser-172 together coordinate adenosine 3',5'-bisphosphate. Intrachain disulfides connect Cys-201–Cys-209 and Cys-222–Cys-228. Adenosine 3',5'-bisphosphate contacts are provided by Tyr-279, Ser-285, Thr-290, and Lys-293.

This sequence belongs to the sulfotransferase 3 family. As to quaternary structure, homotrimer.

The protein localises to the golgi apparatus membrane. Catalyzes the transfer of a sulfo group from 3'-phospho-5'-adenylyl sulfate (PAPS) to the 2-OH position of iduronic acid (IdoA) or glucuronic acid (GlcA) within the heparan sulfate (HS) chain and participates in HS biosynthesis. The chain is Heparan sulfate 2-O-sulfotransferase 1 from Xenopus laevis (African clawed frog).